The following is a 768-amino-acid chain: 5-methyltetrahydropteroyltriglutamate--homocysteine methyltransferase (768 aa).

Residues 17-20 and Lys-117 contribute to the 5-methyltetrahydropteroyltri-L-glutamate site; that span reads RELK. L-homocysteine contacts are provided by residues 442–444 and Glu-495; that span reads IGS. Residues 442–444 and Glu-495 contribute to the L-methionine site; that span reads IGS. 5-methyltetrahydropteroyltri-L-glutamate-binding positions include 526 to 527 and Trp-572; that span reads RC. Position 610 (Asp-610) interacts with L-homocysteine. Asp-610 contributes to the L-methionine binding site. Position 616 (Glu-616) interacts with 5-methyltetrahydropteroyltri-L-glutamate. Positions 653, 655, and 677 each coordinate Zn(2+). Catalysis depends on His-706, which acts as the Proton donor. Residue Cys-738 participates in Zn(2+) binding.

Belongs to the vitamin-B12 independent methionine synthase family. Zn(2+) serves as cofactor.

It catalyses the reaction 5-methyltetrahydropteroyltri-L-glutamate + L-homocysteine = tetrahydropteroyltri-L-glutamate + L-methionine. Its pathway is amino-acid biosynthesis; L-methionine biosynthesis via de novo pathway; L-methionine from L-homocysteine (MetE route): step 1/1. Its function is as follows. Catalyzes the transfer of a methyl group from 5-methyltetrahydrofolate to homocysteine resulting in methionine formation. The chain is 5-methyltetrahydropteroyltriglutamate--homocysteine methyltransferase from Bifidobacterium adolescentis (strain ATCC 15703 / DSM 20083 / NCTC 11814 / E194a).